The primary structure comprises 313 residues: tRNA dimethylallyltransferase (313 aa).

Residue 17 to 24 (GPTASGKT) participates in ATP binding. Substrate is bound at residue 19 to 24 (TASGKT). Interaction with substrate tRNA regions lie at residues 42–45 (DSAL), 166–170 (QRLSR), 247–252 (RCVGYR), and 280–287 (KRQITWLR).

Belongs to the IPP transferase family. Monomer. Mg(2+) is required as a cofactor.

It catalyses the reaction adenosine(37) in tRNA + dimethylallyl diphosphate = N(6)-dimethylallyladenosine(37) in tRNA + diphosphate. Its function is as follows. Catalyzes the transfer of a dimethylallyl group onto the adenine at position 37 in tRNAs that read codons beginning with uridine, leading to the formation of N6-(dimethylallyl)adenosine (i(6)A). This Proteus mirabilis (strain HI4320) protein is tRNA dimethylallyltransferase.